The chain runs to 266 residues: Methyl-coenzyme M reductase II subunit gamma (266 aa).

Residue arginine 123 coordinates coenzyme M.

This sequence belongs to the methyl-coenzyme M reductase gamma subunit family. As to quaternary structure, MCR is a hexamer of two alpha, two beta, and two gamma chains, forming a dimer of heterotrimers. Coenzyme F430 is required as a cofactor.

The catalysed reaction is coenzyme B + methyl-coenzyme M = methane + coenzyme M-coenzyme B heterodisulfide. Its pathway is one-carbon metabolism; methyl-coenzyme M reduction; methane from methyl-coenzyme M: step 1/1. In terms of biological role, component of the methyl-coenzyme M reductase (MCR) I that catalyzes the reductive cleavage of methyl-coenzyme M (CoM-S-CH3 or 2-(methylthio)ethanesulfonate) using coenzyme B (CoB or 7-mercaptoheptanoylthreonine phosphate) as reductant which results in the production of methane and the mixed heterodisulfide of CoB and CoM (CoM-S-S-CoB). This is the final step in methanogenesis. The protein is Methyl-coenzyme M reductase II subunit gamma (mrtG) of Methanocaldococcus jannaschii (strain ATCC 43067 / DSM 2661 / JAL-1 / JCM 10045 / NBRC 100440) (Methanococcus jannaschii).